A 1769-amino-acid chain; its full sequence is Gamma-tubulin complex component 6 (1769 aa).

Disordered stretches follow at residues E809–D842, S859–T881, and T1284–R1360. The segment covering F820–G831 has biased composition (polar residues). The span at P1314 to E1326 shows a compositional bias: basic and acidic residues. Residues L1332–P1343 are compositionally biased toward polar residues.

This sequence belongs to the TUBGCP family. As to quaternary structure, component of the gamma-tubulin ring complex (gTuRC) consisting of TUBGCP2, TUBGCP3, TUBGCP4, TUBGCP5 and TUBGCP6 and gamma-tubulin TUBG1 or TUBG2. TUBGCP2, TUBGCP3, TUBGCP4, TUBGCP5 and TUBGCP6 assemble in a 5:5:2:1:1 stoichiometry; each is associated with a gamma-tubulin, thereby arranging 14 gamma-tubulins in a helical manner. Gamma-tubulin at the first position is blocked by TUBGCP3 at the last position, allowing 13 protafilaments to grow into a microtubule. The gTuRC (via TUBGCP3 and TUBGCP6) interacts with ACTB and MZT1; the interactions form a luminal bridge that stabilizes the initial structure during complex assembly. The gTuRC (via TUBGCP2) interacts with MZT2A/MZT2B and CDK5RAP2 (via CM1 motif); the interactions play a role in gTuRC activation.

It is found in the cytoplasm. Its subcellular location is the cytoskeleton. The protein localises to the microtubule organizing center. It localises to the centrosome. Component of the gamma-tubulin ring complex (gTuRC) which mediates microtubule nucleation. The gTuRC regulates the minus-end nucleation of alpha-beta tubulin heterodimers that grow into microtubule protafilaments, a critical step in centrosome duplication and spindle formation. The polypeptide is Gamma-tubulin complex component 6 (Tubgcp6) (Mus musculus (Mouse)).